We begin with the raw amino-acid sequence, 873 residues long: Leucine--tRNA ligase (873 aa).

The 'HIGH' region signature appears at 42–52; the sequence is PYPSGKLHMGH. Residues 624–643 form a disordered region; sequence PVEIGGTEKMSKSKNNGVDP. The short motif at 632 to 636 is the 'KMSKS' region element; it reads KMSKS. Lys-635 is an ATP binding site.

The protein belongs to the class-I aminoacyl-tRNA synthetase family.

It is found in the cytoplasm. The enzyme catalyses tRNA(Leu) + L-leucine + ATP = L-leucyl-tRNA(Leu) + AMP + diphosphate. The sequence is that of Leucine--tRNA ligase from Pseudomonas aeruginosa (strain LESB58).